We begin with the raw amino-acid sequence, 225 residues long: MNSIEFPLLDRTTPISVISTTSNDLSNWSRLSSLWPLLYGTSCCFIEFASLIGSRFDFDRYGLVPRSSPRQADLILTAGTVTMKMAPSLVRLYEQMPEQKYVIAMGACTITGGMFSTDSYSTVRGVDKLIPVDVYLPGCPPKPEAIIDAITKLRKKISREIYEDRIRSQQGNRCFTTNHKFHIGRTTNTGNYDQGLLYQPPSTSKIAPEAFFKYKKSVSSPELVN.

Positions 43, 44, 108, and 139 each coordinate [4Fe-4S] cluster.

It belongs to the complex I 20 kDa subunit family. As to quaternary structure, NDH is composed of at least 16 different subunits, 5 of which are encoded in the nucleus. [4Fe-4S] cluster serves as cofactor.

The protein resides in the plastid. Its subcellular location is the chloroplast thylakoid membrane. It catalyses the reaction a plastoquinone + NADH + (n+1) H(+)(in) = a plastoquinol + NAD(+) + n H(+)(out). It carries out the reaction a plastoquinone + NADPH + (n+1) H(+)(in) = a plastoquinol + NADP(+) + n H(+)(out). In terms of biological role, NDH shuttles electrons from NAD(P)H:plastoquinone, via FMN and iron-sulfur (Fe-S) centers, to quinones in the photosynthetic chain and possibly in a chloroplast respiratory chain. The immediate electron acceptor for the enzyme in this species is believed to be plastoquinone. Couples the redox reaction to proton translocation, and thus conserves the redox energy in a proton gradient. The sequence is that of NAD(P)H-quinone oxidoreductase subunit K, chloroplastic from Populus trichocarpa (Western balsam poplar).